Here is an 826-residue protein sequence, read N- to C-terminus: (2S)-3-sulfopropanediol dehydratase (826 aa).

One can recognise a PFL domain in the interval 33-695 (PRVNRLRQAF…NTNASIDGRK (663 aa)). The active-site Cysteine radical intermediate is Cys464. The active-site Proton acceptor is Glu466. In terms of domain architecture, Glycine radical spans 706 to 826 (PVHTDGGSHD…DLIQRTELHF (121 aa)). Gly802 carries the post-translational modification Glycine radical.

The protein belongs to the glycyl radical enzyme (GRE) family. Post-translationally, requires the activating protein HpfH to generate the key active site glycyl radical on Gly-802 that is involved in catalysis.

It catalyses the reaction (2S)-3-sulfopropanediol = 3-oxopropane-1-sulfonate + H2O. Its pathway is organosulfur degradation; alkanesulfonate degradation. In terms of biological role, involved in the degradation of the organosulfur compound 2(S)-dihydroxypropanesulfonate (DHPS). Catalyzes the radical-mediated dehydration of DHPS to produce 3-sulfopropionaldehyde (3-oxopropane-1-sulfonate). The sequence is that of (2S)-3-sulfopropanediol dehydratase from Klebsiella oxytoca.